Consider the following 186-residue polypeptide: Orotate phosphoribosyltransferase (186 aa).

Residues Arg-96, Lys-100, His-102, and 121-129 (DDVATTGTS) contribute to the 5-phospho-alpha-D-ribose 1-diphosphate site. Residues Thr-125 and Arg-153 each coordinate orotate.

It belongs to the purine/pyrimidine phosphoribosyltransferase family. PyrE subfamily. In terms of assembly, homodimer. Mg(2+) is required as a cofactor.

It carries out the reaction orotidine 5'-phosphate + diphosphate = orotate + 5-phospho-alpha-D-ribose 1-diphosphate. It participates in pyrimidine metabolism; UMP biosynthesis via de novo pathway; UMP from orotate: step 1/2. Its function is as follows. Catalyzes the transfer of a ribosyl phosphate group from 5-phosphoribose 1-diphosphate to orotate, leading to the formation of orotidine monophosphate (OMP). The polypeptide is Orotate phosphoribosyltransferase (Aeropyrum pernix (strain ATCC 700893 / DSM 11879 / JCM 9820 / NBRC 100138 / K1)).